Here is a 485-residue protein sequence, read N- to C-terminus: Hydrogenase transcriptional regulatory protein HoxA (485 aa).

The region spanning 6–120 (TILVVDDEVR…QLVETVKEAV (115 aa)) is the Response regulatory domain. Asp54 bears the 4-aspartylphosphate mark. Residues 166–392 (STESPMHAVI…ELQNEIQRMA (227 aa)) enclose the Sigma-54 factor interaction domain. ATP is bound by residues 192-199 (GESGTGKE) and 264-273 (EIGETSPAFQ). The segment at 404–426 (PLLGRRNGKRSAPLPAHGRLNGS) is disordered. A DNA-binding region (H-T-H motif) is located at residues 451 to 470 (NISRVASELGLSRVGLRNKL).

Its subcellular location is the cytoplasm. Functionally, probable member of the two-component regulatory system involved in the regulation of the hydrogenase activity. HoxA is probably phosphorylated by a sensory component (which could be HoxX) and then acts in conjunction with sigma-54 as a transcriptional activator. The protein is Hydrogenase transcriptional regulatory protein HoxA (hoxA) of Bradyrhizobium diazoefficiens (strain JCM 10833 / BCRC 13528 / IAM 13628 / NBRC 14792 / USDA 110).